Here is a 40-residue protein sequence, read N- to C-terminus: Beta-defensin 1 (40 aa).

Disulfide bonds link C7-C35, C14-C29, and C19-C36. Position 40 is a glycine amide (G40).

In terms of assembly, monomer. Homodimer.

It is found in the secreted. The protein resides in the membrane. Its function is as follows. Has antimicrobial activity against the Gram-positive bacteria methicillin-resistant S.aureus ATCC 33591 and L.monocytogenes EGD, the Gram-negative bacterium E.coli ML53p and the yeast C.albicans 820. Has no hemolytic activity towards human erythrocytes. This Emys orbicularis (European pond turtle) protein is Beta-defensin 1.